The following is a 292-amino-acid chain: tRNA pseudouridine synthase B (292 aa).

The Nucleophile role is filled by Asp38.

It belongs to the pseudouridine synthase TruB family. Type 1 subfamily.

It catalyses the reaction uridine(55) in tRNA = pseudouridine(55) in tRNA. Its function is as follows. Responsible for synthesis of pseudouridine from uracil-55 in the psi GC loop of transfer RNAs. This is tRNA pseudouridine synthase B from Streptococcus pneumoniae serotype 4 (strain ATCC BAA-334 / TIGR4).